Consider the following 733-residue polypeptide: Ribosomal protein S6 kinase alpha-2 (733 aa).

The region spanning 59–318 (FELLKVLGQG…VEEIKRHPFF (260 aa)) is the Protein kinase 1 domain. ATP contacts are provided by residues 65 to 73 (LGQGSYGKV) and Lys-91. Asp-184 (proton acceptor) is an active-site residue. Phosphoserine; by PDPK1 is present on Ser-218. One can recognise an AGC-kinase C-terminal domain in the interval 319–388 (VTIDWNTLYR…VASSLIQEPS (70 aa)). Ser-377 is subject to Phosphoserine. Positions 415–672 (YEIKEDIGVG…AMQVLKHPWV (258 aa)) constitute a Protein kinase 2 domain. Residues 421-429 (IGVGSYSVC) and Lys-444 contribute to the ATP site. Asp-532 functions as the Proton acceptor in the catalytic mechanism.

Belongs to the protein kinase superfamily. AGC Ser/Thr protein kinase family. S6 kinase subfamily. As to quaternary structure, forms a complex with either MAPK1/ERK2 or MAPK3/ERK1 in quiescent cells. Transiently dissociates following mitogenic stimulation. Interacts with FBXO5; cooperate to induce the metaphase arrest of early blastomeres; increases and stabilizes interaction of FBXO5 with CDC20. The cofactor is Mg(2+). Activated by phosphorylation at Ser-218 by PDPK1. Autophosphorylated on Ser-377, as part of the activation process. May be phosphorylated at Thr-356 and Ser-360 by MAPK1/ERK2 and MAPK3/ERK1. Post-translationally, N-terminal myristoylation results in an activated kinase in the absence of added growth factors. Widely expressed with higher expression in lung, skeletal muscle, brain, uterus, ovary, thyroid and prostate.

It localises to the nucleus. The protein localises to the cytoplasm. It catalyses the reaction L-seryl-[protein] + ATP = O-phospho-L-seryl-[protein] + ADP + H(+). The enzyme catalyses L-threonyl-[protein] + ATP = O-phospho-L-threonyl-[protein] + ADP + H(+). Its activity is regulated as follows. Upon extracellular signal or mitogen stimulation, phosphorylated at Thr-570 in the C-terminal kinase domain (CTKD) by MAPK1/ERK2 and MAPK3/ERK1. The activated CTKD then autophosphorylates Ser-377, allowing binding of PDPK1, which in turn phosphorylates Ser-218 in the N-terminal kinase domain (NTDK) leading to the full activation of the protein and subsequent phosphorylation of the substrates by the NTKD. Functionally, serine/threonine-protein kinase that acts downstream of ERK (MAPK1/ERK2 and MAPK3/ERK1) signaling and mediates mitogenic and stress-induced activation of transcription factors, regulates translation, and mediates cellular proliferation, survival, and differentiation. May function as tumor suppressor in epithelial ovarian cancer cells. This Homo sapiens (Human) protein is Ribosomal protein S6 kinase alpha-2 (RPS6KA2).